A 601-amino-acid polypeptide reads, in one-letter code: ATP-dependent RNA helicase DeaD (601 aa).

The Q motif signature appears at 6–34 (STFSFLGLNPFIIQSLNEMGYVKPSPIQA). A Helicase ATP-binding domain is found at 37 to 208 (IPLLLEGRDV…KRFMRNPKEI (172 aa)). Residue 50–57 (AQTGSGKT) coordinates ATP. The DEAD box motif lies at 156–159 (DEAD). Positions 231–378 (KTDALIRFLE…EVQLPKVELL (148 aa)) constitute a Helicase C-terminal domain. The segment covering 552-576 (SRHYENKTTHRSIFNKDKNSNRRVS) has biased composition (basic and acidic residues). Residues 552–601 (SRHYENKTTHRSIFNKDKNSNRRVSDGSFNKSNSPKKTEFKSSFFRRRNV) are disordered.

It belongs to the DEAD box helicase family. DeaD/CsdA subfamily.

Its subcellular location is the cytoplasm. It carries out the reaction ATP + H2O = ADP + phosphate + H(+). DEAD-box RNA helicase involved in various cellular processes at low temperature, including ribosome biogenesis, mRNA degradation and translation initiation. The chain is ATP-dependent RNA helicase DeaD from Buchnera aphidicola subsp. Acyrthosiphon pisum (strain APS) (Acyrthosiphon pisum symbiotic bacterium).